Reading from the N-terminus, the 334-residue chain is Ephrin-B1 (334 aa).

Residues 1-25 (MARPRGGRWLLGVLLALCRLAAPLA) form the signal peptide. An Ephrin RBD domain is found at 26 to 160 (KSLEPVSWSA…TRSMKIVMKV (135 aa)). At 26 to 231 (KSLEPVSWSA…FLSSKVAVFA (206 aa)) the chain is on the extracellular side. Intrachain disulfides connect C60–C97 and C85–C149. N135 carries N-linked (GlcNAc...) asparagine glycosylation. The tract at residues 175 to 218 (SRPSKEADNTVKIVTQSPRHKVPTVEEPGKPGSVNQNGQETQGP) is disordered. Residues 207–218 (SVNQNGQETQGP) show a composition bias toward polar residues. Residues 232–252 (AIGAGCVIFILIIIFLVVLLI) form a helical membrane-spanning segment. The Cytoplasmic portion of the chain corresponds to 253 to 334 (KIRKRHRKHT…QSPANIYYKV (82 aa)). The PDZ-binding motif lies at 332–334 (YKV).

This sequence belongs to the ephrin family. Binds to the receptor tyrosine kinase EPHB2. Interacts with GRIP1 and GRIP2. Post-translationally, inducible phosphorylation of tyrosine residues in the cytoplasmic domain.

It localises to the membrane. Its function is as follows. Cell surface transmembrane ligand for Eph receptors, a family of receptor tyrosine kinases which are crucial for migration, repulsion and adhesion during neuronal, vascular and epithelial development. Binds promiscuously Eph receptors residing on adjacent cells, leading to contact-dependent bidirectional signaling into neighboring cells. The signaling pathway downstream of the receptor is referred to as forward signaling while the signaling pathway downstream of the ephrin ligand is referred to as reverse signaling. This Gallus gallus (Chicken) protein is Ephrin-B1 (EFNB1).